The chain runs to 558 residues: Protein NRT1/ PTR FAMILY 2.3 (558 aa).

A run of 12 helical transmembrane segments spans residues threonine 33 to isoleucine 53, valine 69 to phenylalanine 89, isoleucine 92 to isoleucine 112, valine 128 to valine 148, phenylalanine 176 to valine 196, serine 203 to valine 223, leucine 329 to leucine 349, valine 371 to methionine 391, leucine 403 to valine 423, valine 439 to alanine 459, serine 478 to isoleucine 498, and valine 517 to tryptophan 537.

This sequence belongs to the major facilitator superfamily. Proton-dependent oligopeptide transporter (POT/PTR) (TC 2.A.17) family. As to expression, expressed in flowers, siliques and root epidermis or cortex. Detected in shoots.

The protein localises to the membrane. In terms of biological role, transporter involved in a passive nitrate efflux. This Arabidopsis thaliana (Mouse-ear cress) protein is Protein NRT1/ PTR FAMILY 2.3 (NPF2.3).